Reading from the N-terminus, the 193-residue chain is Oleosin S1-2 (193 aa).

Residue A2 is modified to N-acetylalanine. Residues 2-39 (ADVRTHAHQVQVHPLRQHEGGIKVVYPQSGPSSTQVLA) form a polar region. A run of 3 helical transmembrane segments spans residues 37–57 (VLAV…AGLT), 66–86 (ILAF…AFVI), and 87–107 (GLAM…LSSM). The tract at residues 40 to 113 (VVAGVPVGGT…LSSMSWVLNH (74 aa)) is hydrophobic. Residues 139–193 (AGQRTKDAGQTIEDKAHDVRESKTYDVRDRDTKGHTASGGDRDTKTTREVRVATT) are disordered. Basic and acidic residues predominate over residues 142-193 (RTKDAGQTIEDKAHDVRESKTYDVRDRDTKGHTASGGDRDTKTTREVRVATT).

The protein belongs to the oleosin family.

It localises to the lipid droplet. Its subcellular location is the membrane. Its function is as follows. May have a structural role to stabilize the lipid body during desiccation of the seed by preventing coalescence of the oil. Probably interacts with both lipid and phospholipid moieties of lipid bodies. May also provide recognition signals for specific lipase anchorage in lipolysis during seedling growth. This is Oleosin S1-2 (S1) from Brassica napus (Rape).